A 200-amino-acid polypeptide reads, in one-letter code: Probable nicotinate-nucleotide adenylyltransferase (200 aa).

This sequence belongs to the NadD family.

The catalysed reaction is nicotinate beta-D-ribonucleotide + ATP + H(+) = deamido-NAD(+) + diphosphate. Its pathway is cofactor biosynthesis; NAD(+) biosynthesis; deamido-NAD(+) from nicotinate D-ribonucleotide: step 1/1. Functionally, catalyzes the reversible adenylation of nicotinate mononucleotide (NaMN) to nicotinic acid adenine dinucleotide (NaAD). This Leifsonia xyli subsp. xyli (strain CTCB07) protein is Probable nicotinate-nucleotide adenylyltransferase.